Consider the following 140-residue polypeptide: ATP synthase epsilon chain (140 aa).

It belongs to the ATPase epsilon chain family. As to quaternary structure, F-type ATPases have 2 components, CF(1) - the catalytic core - and CF(0) - the membrane proton channel. CF(1) has five subunits: alpha(3), beta(3), gamma(1), delta(1), epsilon(1). CF(0) has three main subunits: a, b and c.

The protein resides in the cell inner membrane. Its function is as follows. Produces ATP from ADP in the presence of a proton gradient across the membrane. In Janthinobacterium sp. (strain Marseille) (Minibacterium massiliensis), this protein is ATP synthase epsilon chain.